A 172-amino-acid polypeptide reads, in one-letter code: Small ribosomal subunit protein uS5 (172 aa).

The 64-residue stretch at 16 to 79 (LKDRLVAINR…ESAKKNLTRV (64 aa)) folds into the S5 DRBM domain.

It belongs to the universal ribosomal protein uS5 family. As to quaternary structure, part of the 30S ribosomal subunit. Contacts proteins S4 and S8.

With S4 and S12 plays an important role in translational accuracy. In terms of biological role, located at the back of the 30S subunit body where it stabilizes the conformation of the head with respect to the body. In Bacteroides fragilis (strain ATCC 25285 / DSM 2151 / CCUG 4856 / JCM 11019 / LMG 10263 / NCTC 9343 / Onslow / VPI 2553 / EN-2), this protein is Small ribosomal subunit protein uS5.